Reading from the N-terminus, the 234-residue chain is Elongation factor Tu, chloroplastic (234 aa).

The region spanning 1–125 is the tr-type G domain; it reads KNMITGAAQM…KVDSYIPTPE (125 aa). 47 to 50 contacts GTP; the sequence is NKQD.

This sequence belongs to the TRAFAC class translation factor GTPase superfamily. Classic translation factor GTPase family. EF-Tu/EF-1A subfamily.

Its subcellular location is the plastid. It is found in the chloroplast. The enzyme catalyses GTP + H2O = GDP + phosphate + H(+). In terms of biological role, GTP hydrolase that promotes the GTP-dependent binding of aminoacyl-tRNA to the A-site of ribosomes during protein biosynthesis. The protein is Elongation factor Tu, chloroplastic (tufA) of Pandorina morum (Freshwater green alga).